Here is a 368-residue protein sequence, read N- to C-terminus: 1-deoxy-D-xylulose 5-phosphate reductoisomerase (368 aa).

The NADPH site is built by Thr7, Gly8, Ser9, Ile10, Gly31, Lys32, Asn33, and Asn113. Lys114 contributes to the 1-deoxy-D-xylulose 5-phosphate binding site. Glu115 is a binding site for NADPH. Mn(2+) is bound at residue Asp133. 1-deoxy-D-xylulose 5-phosphate-binding residues include Ser134, Glu135, Ser158, and His181. Glu135 is a Mn(2+) binding site. An NADPH-binding site is contributed by Gly187. 4 residues coordinate 1-deoxy-D-xylulose 5-phosphate: Ser194, Asn199, Lys200, and Glu203. Glu203 serves as a coordination point for Mn(2+).

It belongs to the DXR family. Requires Mg(2+) as cofactor. Mn(2+) serves as cofactor.

The catalysed reaction is 2-C-methyl-D-erythritol 4-phosphate + NADP(+) = 1-deoxy-D-xylulose 5-phosphate + NADPH + H(+). It participates in isoprenoid biosynthesis; isopentenyl diphosphate biosynthesis via DXP pathway; isopentenyl diphosphate from 1-deoxy-D-xylulose 5-phosphate: step 1/6. Catalyzes the NADPH-dependent rearrangement and reduction of 1-deoxy-D-xylulose-5-phosphate (DXP) to 2-C-methyl-D-erythritol 4-phosphate (MEP). This is 1-deoxy-D-xylulose 5-phosphate reductoisomerase from Helicobacter pylori (strain P12).